The following is an 803-amino-acid chain: Nucleoporin nup82 (803 aa).

Component of the nuclear pore complex (NPC). NPC constitutes the exclusive means of nucleocytoplasmic transport. NPCs allow the passive diffusion of ions and small molecules and the active, nuclear transport receptor-mediated bidirectional transport of macromolecules such as proteins, RNAs, ribonucleoparticles (RNPs), and ribosomal subunits across the nuclear envelope.

The protein resides in the nucleus. It localises to the nuclear pore complex. It is found in the nucleus membrane. Functions as a component of the nuclear pore complex (NPC). NPC components, collectively referred to as nucleoporins (NUPs), can play the role of both NPC structural components and of docking or interaction partners for transiently associated nuclear transport factors. The sequence is that of Nucleoporin nup82 from Schizosaccharomyces pombe (strain 972 / ATCC 24843) (Fission yeast).